The chain runs to 251 residues: MLNFLNFYSVPLAELEVGKHLYWQIGNLKLHGQVFLTSWFVIGVLVLASVAASSNVKRIPSGIQNLLEYALEFIRDLAKNQIGEKEYRPWVPFVGTLFLFIFVSNWSGALVPFKLIHLPEGELTAPTSDINTTVALALLTSLAYFYAGFSKKGLGYFGNYVQPVSFMLPFKIIEDFTKPLSLSFRLFGNILADELVVGVLVLLVPLFVPLPVMALGLFTSAIQALIFATLAAAYIGEAMEDHHGEEHEEHH.

5 helical membrane passes run 34–54 (VFLTSWFVIGVLVLASVAASS), 93–113 (FVGTLFLFIFVSNWSGALVPF), 130–150 (INTTVALALLTSLAYFYAGFS), 195–215 (LVVGVLVLLVPLFVPLPVMAL), and 216–236 (GLFTSAIQALIFATLAAAYIG).

This sequence belongs to the ATPase A chain family. F-type ATPases have 2 components, CF(1) - the catalytic core - and CF(0) - the membrane proton channel. CF(1) has five subunits: alpha(3), beta(3), gamma(1), delta(1), epsilon(1). CF(0) has four main subunits: a, b, b' and c.

Its subcellular location is the cellular thylakoid membrane. Its function is as follows. Key component of the proton channel; it plays a direct role in the translocation of protons across the membrane. The protein is ATP synthase subunit a of Nostoc sp. (strain PCC 7120 / SAG 25.82 / UTEX 2576).